A 117-amino-acid polypeptide reads, in one-letter code: MAVNIYDLAHDLDKGIRETPEFLSLQDAYREVNENADAKAKFERFRDVQVTIQEKQMTGQEIDDETVNVAQEVAQEVQENELIVKLMEKEQAMSTIINDLNRIIMTPLQDLYNVSND.

The protein belongs to the UPF0342 family.

The polypeptide is UPF0342 protein lwe2240 (Listeria welshimeri serovar 6b (strain ATCC 35897 / DSM 20650 / CCUG 15529 / CIP 8149 / NCTC 11857 / SLCC 5334 / V8)).